The following is a 447-amino-acid chain: Phosphoglucosamine mutase (447 aa).

The active-site Phosphoserine intermediate is the S102. Mg(2+) contacts are provided by S102, D241, D243, and D245. S102 is subject to Phosphoserine.

It belongs to the phosphohexose mutase family. The cofactor is Mg(2+). In terms of processing, activated by phosphorylation.

It catalyses the reaction alpha-D-glucosamine 1-phosphate = D-glucosamine 6-phosphate. Its function is as follows. Catalyzes the conversion of glucosamine-6-phosphate to glucosamine-1-phosphate. In Ruegeria sp. (strain TM1040) (Silicibacter sp.), this protein is Phosphoglucosamine mutase.